The primary structure comprises 145 residues: Large ribosomal subunit protein uL14m (145 aa).

A mitochondrion-targeting transit peptide spans M1 to S30.

The protein belongs to the universal ribosomal protein uL14 family. As to quaternary structure, component of the mitochondrial large ribosomal subunit (mt-LSU). Mature mammalian 55S mitochondrial ribosomes consist of a small (28S) and a large (39S) subunit. The 28S small subunit contains a 12S ribosomal RNA (12S mt-rRNA) and 30 different proteins. The 39S large subunit contains a 16S rRNA (16S mt-rRNA), a copy of mitochondrial valine transfer RNA (mt-tRNA(Val)), which plays an integral structural role, and 52 different proteins. Interacts with MALSU1.

It localises to the mitochondrion. Functionally, forms part of 2 intersubunit bridges in the assembled ribosome. Upon binding to MALSU1 intersubunit bridge formation is blocked, preventing ribosome formation and repressing translation. The sequence is that of Large ribosomal subunit protein uL14m (MRPL14) from Homo sapiens (Human).